The chain runs to 465 residues: Alpha-2A adrenergic receptor (465 aa).

The Extracellular portion of the chain corresponds to 1 to 48; the sequence is MFRQEQPLAEGSFAPMGSLQPDAGNASWNGTEAPGGGARATPYSLQVT. Asn-25 and Asn-29 each carry an N-linked (GlcNAc...) asparagine glycan. Residues 49–74 form a helical membrane-spanning segment; sequence LTLVCLAGLLMLLTVFGNVLVIIAVF. Topologically, residues 75–85 are cytoplasmic; it reads TSRALKAPQNL. A helical membrane pass occupies residues 86–111; sequence FLVSLASADILVATLVIPFSLANEVM. Residues 112 to 121 are Extracellular-facing; it reads GYWYFGKAWC. An intrachain disulfide couples Cys-121 to Cys-203. Residues 122–144 traverse the membrane as a helical segment; sequence EIYLALDVLFCTSSIVHLCAISL. At 145–166 the chain is on the cytoplasmic side; sequence DRYWSITQAIEYNLKRTPRRIK. A helical transmembrane segment spans residues 167-187; it reads AIIITVWVISAVISFPPLISI. The Extracellular portion of the chain corresponds to 188–209; sequence EKKGGGGGPQPAEPRCEINDQK. The helical transmembrane segment at 210 to 232 threads the bilayer; the sequence is WYVISSCIGSFFAPCLIMILVYV. Topologically, residues 233–389 are cytoplasmic; the sequence is RIYQIAKRRT…RQNREKRFTF (157 aa). A disordered region spans residues 242-368; the sequence is TRVPPSRRGP…TPAAGPGEER (127 aa). Residues 313–330 show a composition bias toward basic and acidic residues; the sequence is SSDHAERPPGPRRPERGP. The residue at position 346 (Ser-346) is a Phosphoserine. Arg-368 bears the Omega-N-methylarginine mark. Residues 390–410 traverse the membrane as a helical segment; sequence VLAVVIGVFVVCWFPFFFTYT. At 411-424 the chain is on the extracellular side; it reads LTAVGCSVPRTLFK. Residues 425–444 traverse the membrane as a helical segment; it reads FFFWFGYCNSSLNPVIYTIF. The Cytoplasmic portion of the chain corresponds to 445–465; that stretch reads NHDFRRAFKKILCRGDRKRIV. A lipid anchor (S-palmitoyl cysteine) is attached at Cys-457.

The protein belongs to the G-protein coupled receptor 1 family. Adrenergic receptor subfamily. ADRA2A sub-subfamily.

The protein localises to the cell membrane. Alpha-2 adrenergic receptors mediate the catecholamine-induced inhibition of adenylate cyclase through the action of G proteins. The rank order of potency for agonists of this receptor is oxymetazoline &gt; clonidine &gt; epinephrine &gt; norepinephrine &gt; phenylephrine &gt; dopamine &gt; p-synephrine &gt; p-tyramine &gt; serotonin = p-octopamine. For antagonists, the rank order is yohimbine &gt; phentolamine = mianserine &gt; chlorpromazine = spiperone = prazosin &gt; propanolol &gt; alprenolol = pindolol. The protein is Alpha-2A adrenergic receptor of Homo sapiens (Human).